The chain runs to 361 residues: 3-dehydroquinate synthase (361 aa).

Residues 69–74, 103–107, 127–128, Lys-140, Lys-149, and 167–170 contribute to the NAD(+) site; these read DGEEYK, GVIGD, TT, and TLDT. Residues Glu-182, His-245, and His-262 each coordinate Zn(2+).

It belongs to the sugar phosphate cyclases superfamily. Dehydroquinate synthase family. It depends on Co(2+) as a cofactor. Zn(2+) serves as cofactor. NAD(+) is required as a cofactor.

The protein localises to the cytoplasm. The catalysed reaction is 7-phospho-2-dehydro-3-deoxy-D-arabino-heptonate = 3-dehydroquinate + phosphate. Its pathway is metabolic intermediate biosynthesis; chorismate biosynthesis; chorismate from D-erythrose 4-phosphate and phosphoenolpyruvate: step 2/7. Its function is as follows. Catalyzes the conversion of 3-deoxy-D-arabino-heptulosonate 7-phosphate (DAHP) to dehydroquinate (DHQ). The polypeptide is 3-dehydroquinate synthase (Thioalkalivibrio sulfidiphilus (strain HL-EbGR7)).